A 283-amino-acid chain; its full sequence is MPELPEVETVRRGLEPAMAGRLIAEARVNRADLRWPFPPRMAERLTGQRVLRLRRRSKYILADLSGGQSLLIHLGMSGRMLVSGAQLGEFFHGHPAPSRHDHVVLEMEGGARITFNDARRFGAMDLVATEAAEAHPLLAVLGPEPLGNAFDGAYLAARLEGRRTPIKAALLDQRIVAGLGNIYVCEVLFRAGLAPGRLAGSLSRAEAEGLVPLIREVLLEAIEAGGSSLRDYRQADGELGYFQHTFRVYGREGLPCVTPGCSGTVGRIVQSGRSSFHCPLCQR.

The active-site Schiff-base intermediate with DNA is proline 2. Glutamate 3 functions as the Proton donor in the catalytic mechanism. Lysine 58 (proton donor; for beta-elimination activity) is an active-site residue. DNA is bound by residues histidine 100, arginine 119, and arginine 162. An FPG-type zinc finger spans residues 247–283; sequence RVYGREGLPCVTPGCSGTVGRIVQSGRSSFHCPLCQR. The Proton donor; for delta-elimination activity role is filled by arginine 273.

Belongs to the FPG family. Monomer. Requires Zn(2+) as cofactor.

It carries out the reaction Hydrolysis of DNA containing ring-opened 7-methylguanine residues, releasing 2,6-diamino-4-hydroxy-5-(N-methyl)formamidopyrimidine.. The enzyme catalyses 2'-deoxyribonucleotide-(2'-deoxyribose 5'-phosphate)-2'-deoxyribonucleotide-DNA = a 3'-end 2'-deoxyribonucleotide-(2,3-dehydro-2,3-deoxyribose 5'-phosphate)-DNA + a 5'-end 5'-phospho-2'-deoxyribonucleoside-DNA + H(+). Its function is as follows. Involved in base excision repair of DNA damaged by oxidation or by mutagenic agents. Acts as a DNA glycosylase that recognizes and removes damaged bases. Has a preference for oxidized purines, such as 7,8-dihydro-8-oxoguanine (8-oxoG). Has AP (apurinic/apyrimidinic) lyase activity and introduces nicks in the DNA strand. Cleaves the DNA backbone by beta-delta elimination to generate a single-strand break at the site of the removed base with both 3'- and 5'-phosphates. This is Formamidopyrimidine-DNA glycosylase from Cereibacter sphaeroides (strain ATCC 17029 / ATH 2.4.9) (Rhodobacter sphaeroides).